The following is a 242-amino-acid chain: Ribonuclease PH (242 aa).

Phosphate contacts are provided by residues R87 and 125–127; that span reads GTR.

The protein belongs to the RNase PH family. Homohexameric ring arranged as a trimer of dimers.

It carries out the reaction tRNA(n+1) + phosphate = tRNA(n) + a ribonucleoside 5'-diphosphate. Functionally, phosphorolytic 3'-5' exoribonuclease that plays an important role in tRNA 3'-end maturation. Removes nucleotide residues following the 3'-CCA terminus of tRNAs; can also add nucleotides to the ends of RNA molecules by using nucleoside diphosphates as substrates, but this may not be physiologically important. Probably plays a role in initiation of 16S rRNA degradation (leading to ribosome degradation) during starvation. This Thermosynechococcus vestitus (strain NIES-2133 / IAM M-273 / BP-1) protein is Ribonuclease PH.